The following is a 445-amino-acid chain: Transcription termination factor MTERF15, mitochondrial (445 aa).

The transit peptide at 1–25 (MASKLKTFINLRDYPITLFNQIRSL) directs the protein to the mitochondrion.

The protein belongs to the mTERF family.

The protein localises to the mitochondrion. Functionally, transcription termination factor required for mitochondrial NAD2 intron 3 splicing and normal membrane respiratory chain Complex I activity. Essential for normal plant growth and development. Binds to RNA but not to double-stranded DNA. In Arabidopsis thaliana (Mouse-ear cress), this protein is Transcription termination factor MTERF15, mitochondrial.